The following is a 166-amino-acid chain: Transmembrane protein 278 (166 aa).

Residues 1–15 (MSDQERETEEDEGGD) are compositionally biased toward acidic residues. The interval 1-28 (MSDQERETEEDEGGDPSDTAPMLPQRLP) is disordered. The next 3 membrane-spanning stretches (helical) occupy residues 39–59 (GWAS…WALA), 65–85 (LLLP…VVYL), and 111–131 (AAVI…ASAA).

It belongs to the TMEM88 family.

Its subcellular location is the membrane. The chain is Transmembrane protein 278 (TMEM278) from Bos taurus (Bovine).